A 447-amino-acid chain; its full sequence is MDETSPLVSPLRDSNDFNYGPAEPTSPRGGFGSTPGSVVRLPAGSPGRSRERQPLLDRDRGASPRDPHRNEFPEDPEFREIIRKAERAIEEGIYPERIYQGSSGSYFVKDSAGKIIGVFKPKNEEPYGQLNPKWTKWLQKLCCPCCFGRDCLVLNQGYLSEAGASLVDQKLELNIVPRTKVVYLASETFNYSAIDRVKSRGKRLALEKVPKVGQRFHRIGLPPKVGSFQIFVEGYKDADFWLRRFEAEPLPENTNRQLQLQFERLVVLDYIIRNTDRGNDNWLIKYDYPMDTSSNRDSDWVLVKDPIIKLAAIDNGLAFPLKHPDSWRAYPFYWAWLPQAKVVFSQEIRDLVLPKLADPNFIKDLEEDLYELFKKDPGFDRGQFKKQVSVMRGQILNLSQAMRDGKTPLQLVQMPPVIVETARVPQRANSESYTQSFQSRRPFFTWW.

The tract at residues 1–77 is disordered; sequence MDETSPLVSP…HRNEFPEDPE (77 aa). The span at 48–77 shows a compositional bias: basic and acidic residues; sequence RSRERQPLLDRDRGASPRDPHRNEFPEDPE. Residues 92 to 421 form the PI3K/PI4K catalytic domain; the sequence is GIYPERIYQG…VQMPPVIVET (330 aa). The interval 98–104 is G-loop; it reads IYQGSSG. Residues 99–105 and Lys120 each bind ATP; that span reads YQGSSGS. The segment at 125–127 is important for substrate binding; that stretch reads EPY. An important for interaction with membranes region spans residues 133 to 146; that stretch reads KWTKWLQKLCCPCC. Residues Cys142, Cys143, Cys145, and Cys146 are each lipidated (S-palmitoyl cysteine). 229-232 contributes to the ATP binding site; it reads QIFV. Residues 236–244 are important for interaction with membranes; that stretch reads KDADFWLRR. The segment at 273–281 is catalytic loop; that stretch reads RNTDRGNDN. Positions 312 to 332 are activation loop; it reads AIDNGLAFPLKHPDSWRAYPF. Asp314 contacts ATP. Residues 327 to 336 form an important for interaction with membranes region; that stretch reads WRAYPFYWAW.

Belongs to the PI3/PI4-kinase family. Type II PI4K subfamily.

The protein localises to the golgi apparatus. The protein resides in the trans-Golgi network membrane. Its subcellular location is the membrane raft. It localises to the endosome. It is found in the cytoplasmic vesicle. The protein localises to the cell projection. The protein resides in the dendrite. Its subcellular location is the presynaptic cell membrane. It localises to the synapse. It is found in the synaptosome. The protein localises to the mitochondrion. The protein resides in the membrane. Its subcellular location is the cell membrane. It localises to the perikaryon. It is found in the neuron projection. It carries out the reaction a 1,2-diacyl-sn-glycero-3-phospho-(1D-myo-inositol) + ATP = a 1,2-diacyl-sn-glycero-3-phospho-(1D-myo-inositol 4-phosphate) + ADP + H(+). Its function is as follows. Membrane-bound phosphatidylinositol-4 kinase (PI4-kinase) that catalyzes the phosphorylation of phosphatidylinositol (PI) to phosphatidylinositol 4-phosphate (PI4P), a lipid that plays important roles in endocytosis, Golgi function, protein sorting and membrane trafficking. Besides, phosphorylation of phosphatidylinositol (PI) to phosphatidylinositol 4-phosphate (PI4P) is the first committed step in the generation of phosphatidylinositol 4,5-bisphosphate (PIP2), a precursor of the second messenger inositol 1,4,5-trisphosphate (InsP3). The sequence is that of Phosphatidylinositol 4-kinase type 2-alpha (pi4k2a) from Danio rerio (Zebrafish).